A 483-amino-acid polypeptide reads, in one-letter code: Ero1-like protein (483 aa).

Residues Met-1 to Gly-29 form the signal peptide. Cystine bridges form between Cys-44–Cys-57, Cys-46–Cys-55, Cys-94–Cys-402, Cys-103–Cys-108, Cys-227–Cys-251, and Cys-405–Cys-408. Positions 206, 208, and 219 each coordinate FAD. An N-linked (GlcNAc...) asparagine glycan is attached at Asn-232. 3 residues coordinate FAD: Ser-262, His-265, and Arg-301. Residue Asn-395 is glycosylated (N-linked (GlcNAc...) asparagine).

Belongs to the EROs family. As to quaternary structure, may function both as a monomer and a homodimer. The cofactor is FAD.

The protein localises to the endoplasmic reticulum membrane. Oxidoreductase involved in disulfide bond formation in the endoplasmic reticulum. Efficiently reoxidizes pdi-1, the enzyme catalyzing protein disulfide formation, in order to allow pdi-1 to sustain additional rounds of disulfide formation. Following pdi reoxidation, passes its electrons to molecular oxygen via FAD, leading to the production of reactive oxygen species (ROS) in the cell. In Drosophila melanogaster (Fruit fly), this protein is Ero1-like protein (Ero1L).